Here is a 179-residue protein sequence, read N- to C-terminus: Large ribosomal subunit protein uL5 (179 aa).

Belongs to the universal ribosomal protein uL5 family. Part of the 50S ribosomal subunit; part of the 5S rRNA/L5/L18/L25 subcomplex. Contacts the 5S rRNA and the P site tRNA. Forms a bridge to the 30S subunit in the 70S ribosome.

Functionally, this is one of the proteins that bind and probably mediate the attachment of the 5S RNA into the large ribosomal subunit, where it forms part of the central protuberance. In the 70S ribosome it contacts protein S13 of the 30S subunit (bridge B1b), connecting the 2 subunits; this bridge is implicated in subunit movement. Contacts the P site tRNA; the 5S rRNA and some of its associated proteins might help stabilize positioning of ribosome-bound tRNAs. The protein is Large ribosomal subunit protein uL5 of Prochlorococcus marinus (strain SARG / CCMP1375 / SS120).